The following is a 925-amino-acid chain: Periplasmic nitrate reductase (925 aa).

Positions 1–30 form a signal peptide, tat-type signal; it reads MDRREFIKSSAAAAACSAAGIAVPSSLSAA. The 4Fe-4S Mo/W bis-MGD-type domain occupies 36-92; the sequence is WRWDKSACRFCGTGCGIMVATKNGKIVAVKGDPLAPVNRGLNCIKGYFNAKIMYGED. Cysteine 43, cysteine 46, cysteine 50, and cysteine 78 together coordinate [4Fe-4S] cluster. Residues lysine 80, glutamine 148, asparagine 173, cysteine 177, 210–217, methionine 418, glutamine 422, asparagine 528, 553–554, lysine 576, aspartate 603, and 815–824 each bind Mo-bis(molybdopterin guanine dinucleotide); these read WGANMAEM, SD, and TGRVLEHWHS. Position 891 (tryptophan 891) interacts with substrate. Mo-bis(molybdopterin guanine dinucleotide) contacts are provided by asparagine 899 and lysine 916.

This sequence belongs to the prokaryotic molybdopterin-containing oxidoreductase family. NasA/NapA/NarB subfamily. Component of the periplasmic nitrate reductase NapAB complex composed of NapA and NapB. It depends on [4Fe-4S] cluster as a cofactor. The cofactor is Mo-bis(molybdopterin guanine dinucleotide). Predicted to be exported by the Tat system. The position of the signal peptide cleavage has not been experimentally proven.

The protein resides in the periplasm. It carries out the reaction 2 Fe(II)-[cytochrome] + nitrate + 2 H(+) = 2 Fe(III)-[cytochrome] + nitrite + H2O. In terms of biological role, catalytic subunit of the periplasmic nitrate reductase complex NapAB. Receives electrons from NapB and catalyzes the reduction of nitrate to nitrite. This is Periplasmic nitrate reductase from Campylobacter fetus subsp. fetus (strain 82-40).